A 258-amino-acid chain; its full sequence is Cyclohexa-1,5-dienecarbonyl-CoA hydratase (258 aa).

It belongs to the enoyl-CoA hydratase/isomerase family.

The enzyme catalyses cyclohexa-1,5-diene-1-carbonyl-CoA + H2O = 6-hydroxycyclohex-1-ene-1-carbonyl-CoA. The protein operates within aromatic compound metabolism; benzoyl-CoA degradation. Its function is as follows. Catalyzes the hydration of cyclohexa-1,5-diene-1-carboxyl-CoA. This chain is Cyclohexa-1,5-dienecarbonyl-CoA hydratase (dch), found in Thauera aromatica.